We begin with the raw amino-acid sequence, 457 residues long: F-box/LRR-repeat protein At2g42730 (457 aa).

The 47-residue stretch at 4 to 50 (KDVISRLPDEVLGRILSLISTKEAVSTSVLSKRWKNMFVLVSNLDID) folds into the F-box domain. LRR repeat units follow at residues 265-288 (MDET…MRNL), 292-315 (IRNV…CKEM), and 318-343 (FDSL…LIKN).

The polypeptide is F-box/LRR-repeat protein At2g42730 (Arabidopsis thaliana (Mouse-ear cress)).